The following is a 175-amino-acid chain: MSTTNHDHHIYVLMGVSGSGKSAVASEVAHQLHAAFLDGDFLHPRRNIEKMASGEPLNDDDRKPWLQALNDAAFAMQRTNKVSLIVCSALKKHYRDLLREGNPNLSFIYLKGDFDVIESRLKARKGHFFKTQMLVTQFETLQEPGADETDVLVVDIDQPLEGVVASTIEVIKKGK.

15–22 (GVSGSGKS) contributes to the ATP binding site.

The protein belongs to the gluconokinase GntK/GntV family.

The enzyme catalyses D-gluconate + ATP = 6-phospho-D-gluconate + ADP + H(+). It participates in carbohydrate acid metabolism; D-gluconate degradation. This is Thermoresistant gluconokinase (gntK) from Escherichia coli (strain K12).